Here is a 607-residue protein sequence, read N- to C-terminus: MPRKKPFSVKQKKKQLQDKRERKRGLQDGLRSSSNSRSGSRERREEQTDTSDGESVTHHIRRLNQQPSQGLGPRGYDPNRYRLHFERDSREEVERRKRAAREQVLQPVSAEVLELDIREVYQPGSVLDFPRRPPWSYEMSKEQLMSQEERSFQEYLGKIHGAYSSEKLSYFEHNLETWRQLWRVLEMSDIVLLITDIRHPVVNFPPALYEYVTGELGLALVLVLNKVDLAPPALVVAWKHYFHQHYPQLHVVLFTSFPRDPRTPQDPSSVLKKSRRRGRGWTRALGPEQLLRACEAITVGKVDLSSWREKIARDVAGATWGNGSGEEEEEDDGPAVLVEQQTDSAMEPTGPTRERYKDGVVTIGCVGFPNVGKSSLINGLVGRKVVSVSRTPGHTRYFQTYFLTPSVKLCDCPGLIFPSLLPRQLQVLAGIYPIAQIQEPYTAVGYLASRIPVQALLHLRHPEAEDPSAEHPWCAWDICEAWAEKRGYKTAKAARNDVYRAANSLLRLAVDGRLSLCFHPPGYSEQKGTWESHPETTELVVLQGRVGPAGDEEEEEEEELSSSCEEEGEEDRDADEEGEGDEDTPTSAPGSSLAGRNPYALLGEDEC.

A compositionally biased stretch (basic residues) spans 1-14 (MPRKKPFSVKQKKK). Residues 1–81 (MPRKKPFSVK…GPRGYDPNRY (81 aa)) form a disordered region. Residues 15 to 26 (QLQDKRERKRGL) are compositionally biased toward basic and acidic residues. Phosphoserine is present on residues Ser32, Ser33, and Ser34. Phosphothreonine is present on residues Thr48 and Thr50. Ser51 and Ser68 each carry phosphoserine. In terms of domain architecture, CP-type G spans 178 to 418 (WRQLWRVLEM…LCDCPGLIFP (241 aa)). 225 to 228 (NKVD) serves as a coordination point for GTP. Ser324 carries the phosphoserine modification. GTP contacts are provided by residues 367–374 (GFPNVGKS) and 411–415 (DCPGL). The tract at residues 547-607 (GPAGDEEEEE…PYALLGEDEC (61 aa)) is disordered. Residues 550–584 (GDEEEEEEEELSSSCEEEGEEDRDADEEGEGDEDT) show a composition bias toward acidic residues. A phosphoserine mark is found at Ser561, Ser562, and Ser563.

This sequence belongs to the TRAFAC class YlqF/YawG GTPase family.

Possible regulatory or functional link with the histocompatibility cluster. This Macaca fascicularis (Crab-eating macaque) protein is Guanine nucleotide-binding protein-like 1 (GNL1).